The chain runs to 177 residues: Cyclic pyranopterin monophosphate synthase (177 aa).

Substrate-binding positions include 89–91 and 125–126; these read LCH and ME. Residue Asp-140 is part of the active site.

It belongs to the MoaC family. In terms of assembly, homohexamer; trimer of dimers.

The catalysed reaction is (8S)-3',8-cyclo-7,8-dihydroguanosine 5'-triphosphate = cyclic pyranopterin phosphate + diphosphate. It functions in the pathway cofactor biosynthesis; molybdopterin biosynthesis. Functionally, catalyzes the conversion of (8S)-3',8-cyclo-7,8-dihydroguanosine 5'-triphosphate to cyclic pyranopterin monophosphate (cPMP). The chain is Cyclic pyranopterin monophosphate synthase from Streptomyces griseus subsp. griseus (strain JCM 4626 / CBS 651.72 / NBRC 13350 / KCC S-0626 / ISP 5235).